Reading from the N-terminus, the 554-residue chain is Dihydroxy-acid dehydratase (554 aa).

D78 contacts Mg(2+). C119 contributes to the [2Fe-2S] cluster binding site. Mg(2+) is bound by residues D120 and K121. At K121 the chain carries N6-carboxylysine. [2Fe-2S] cluster is bound at residue C191. E442 is a binding site for Mg(2+). S468 functions as the Proton acceptor in the catalytic mechanism.

The protein belongs to the IlvD/Edd family. As to quaternary structure, homodimer. The cofactor is [2Fe-2S] cluster. Mg(2+) is required as a cofactor.

It carries out the reaction (2R)-2,3-dihydroxy-3-methylbutanoate = 3-methyl-2-oxobutanoate + H2O. It catalyses the reaction (2R,3R)-2,3-dihydroxy-3-methylpentanoate = (S)-3-methyl-2-oxopentanoate + H2O. Its pathway is amino-acid biosynthesis; L-isoleucine biosynthesis; L-isoleucine from 2-oxobutanoate: step 3/4. It participates in amino-acid biosynthesis; L-valine biosynthesis; L-valine from pyruvate: step 3/4. Its function is as follows. Functions in the biosynthesis of branched-chain amino acids. Catalyzes the dehydration of (2R,3R)-2,3-dihydroxy-3-methylpentanoate (2,3-dihydroxy-3-methylvalerate) into 2-oxo-3-methylpentanoate (2-oxo-3-methylvalerate) and of (2R)-2,3-dihydroxy-3-methylbutanoate (2,3-dihydroxyisovalerate) into 2-oxo-3-methylbutanoate (2-oxoisovalerate), the penultimate precursor to L-isoleucine and L-valine, respectively. The sequence is that of Dihydroxy-acid dehydratase from Thermotoga sp. (strain RQ2).